Here is a 390-residue protein sequence, read N- to C-terminus: S-adenosylmethionine synthase 2 (390 aa).

Glu9 contributes to the Mg(2+) binding site. His15 serves as a coordination point for ATP. K(+) is bound at residue Glu43. 2 residues coordinate L-methionine: Glu56 and Gln99. Residues 167–169, 235–238, Asp246, 252–253, Ala269, Lys273, and Lys277 each bind ATP; these read DGK, SGRF, and RK. Asp246 provides a ligand contact to L-methionine. Lys277 provides a ligand contact to L-methionine.

Belongs to the AdoMet synthase family. As to quaternary structure, homotetramer. The cofactor is Mn(2+). Mg(2+) is required as a cofactor. Requires Co(2+) as cofactor. K(+) serves as cofactor.

The protein resides in the cytoplasm. It carries out the reaction L-methionine + ATP + H2O = S-adenosyl-L-methionine + phosphate + diphosphate. It functions in the pathway amino-acid biosynthesis; S-adenosyl-L-methionine biosynthesis; S-adenosyl-L-methionine from L-methionine: step 1/1. Catalyzes the formation of S-adenosylmethionine from methionine and ATP. The reaction comprises two steps that are both catalyzed by the same enzyme: formation of S-adenosylmethionine (AdoMet) and triphosphate, and subsequent hydrolysis of the triphosphate. This chain is S-adenosylmethionine synthase 2 (SAM2), found in Petunia hybrida (Petunia).